A 495-amino-acid polypeptide reads, in one-letter code: UDP-N-acetylmuramoyl-L-alanyl-D-glutamate--2,6-diaminopimelate ligase (495 aa).

UDP-N-acetyl-alpha-D-muramoyl-L-alanyl-D-glutamate-binding positions include leucine 27, serine 29, and 44-46; that span reads HQT. 116–122 serves as a coordination point for ATP; the sequence is GTNGKTT. UDP-N-acetyl-alpha-D-muramoyl-L-alanyl-D-glutamate-binding positions include asparagine 157, 158 to 159, serine 185, glutamine 191, and arginine 193; that span reads TT. At lysine 225 the chain carries N6-carboxylysine. Meso-2,6-diaminopimelate-binding positions include arginine 390, 414-417, glycine 465, and glutamate 469; that span reads DNPR. A Meso-diaminopimelate recognition motif motif is present at residues 414-417; sequence DNPR.

The protein belongs to the MurCDEF family. MurE subfamily. Mg(2+) serves as cofactor. Post-translationally, carboxylation is probably crucial for Mg(2+) binding and, consequently, for the gamma-phosphate positioning of ATP.

Its subcellular location is the cytoplasm. The catalysed reaction is UDP-N-acetyl-alpha-D-muramoyl-L-alanyl-D-glutamate + meso-2,6-diaminopimelate + ATP = UDP-N-acetyl-alpha-D-muramoyl-L-alanyl-gamma-D-glutamyl-meso-2,6-diaminopimelate + ADP + phosphate + H(+). It participates in cell wall biogenesis; peptidoglycan biosynthesis. Functionally, catalyzes the addition of meso-diaminopimelic acid to the nucleotide precursor UDP-N-acetylmuramoyl-L-alanyl-D-glutamate (UMAG) in the biosynthesis of bacterial cell-wall peptidoglycan. This is UDP-N-acetylmuramoyl-L-alanyl-D-glutamate--2,6-diaminopimelate ligase from Photorhabdus laumondii subsp. laumondii (strain DSM 15139 / CIP 105565 / TT01) (Photorhabdus luminescens subsp. laumondii).